A 649-amino-acid chain; its full sequence is Acetylcholinesterase (649 aa).

An N-terminal signal peptide occupies residues 1 to 38; it reads MAISCRQSRVLPMSLPLPLTIPLPLVLVLSLHLSGVCG. Residues C104 and C131 are joined by a disulfide bond. 2 N-linked (GlcNAc...) asparagine glycosylation sites follow: N126 and N174. Catalysis depends on S276, which acts as the Acyl-ester intermediate. The cysteines at positions 330 and 345 are disulfide-linked. N331 is a glycosylation site (N-linked (GlcNAc...) asparagine). Active-site charge relay system residues include E405 and H518. An intrachain disulfide couples C480 to C598. An N-linked (GlcNAc...) asparagine glycan is attached at N531. Residue S619 is the site of GPI-anchor amidated serine attachment. Residues 620–649 constitute a propeptide, removed in mature form; that stretch reads GSASISPRLQLLGIAALIYICAALRTKRVF.

It belongs to the type-B carboxylesterase/lipase family. As to quaternary structure, homodimer; disulfide-linked. The active unit is formed by non-covalent association of the 55 kDa and 16 kDa subunits. Proteolytic cleavage into the 16 kDa subunit and the 55 kDa subunits originates from the hydrophilic peptide, aa 148-180, and is associated with excretion out of the cell. In terms of processing, neither N-glycosylation nor dimerization is required for enzyme activity or substrate specificity, but protects the protein against proteolytic digestion.

Its subcellular location is the synapse. The protein resides in the cell membrane. The enzyme catalyses acetylcholine + H2O = choline + acetate + H(+). Rapidly hydrolyzes choline released into the synapse. It can hydrolyze butyrylthiocholine. The polypeptide is Acetylcholinesterase (Ace) (Drosophila melanogaster (Fruit fly)).